We begin with the raw amino-acid sequence, 150 residues long: Protein SprT-like (150 aa).

A SprT-like domain is found at 11-149; that stretch reads ELVDKLSLTY…CGKCRGSLKE (139 aa). Histidine 70 serves as a coordination point for Zn(2+). Glutamate 71 is a catalytic residue. Residue histidine 74 participates in Zn(2+) binding.

It belongs to the SprT family. The cofactor is Zn(2+).

It localises to the cytoplasm. This is Protein SprT-like from Oceanobacillus iheyensis (strain DSM 14371 / CIP 107618 / JCM 11309 / KCTC 3954 / HTE831).